The primary structure comprises 189 residues: NADH-quinone oxidoreductase subunit B (189 aa).

[4Fe-4S] cluster is bound by residues C39, C40, C104, and C135.

The protein belongs to the complex I 20 kDa subunit family. NDH-1 is composed of 14 different subunits. Subunits NuoB, C, D, E, F, and G constitute the peripheral sector of the complex. Requires [4Fe-4S] cluster as cofactor.

Its subcellular location is the cell inner membrane. It carries out the reaction a quinone + NADH + 5 H(+)(in) = a quinol + NAD(+) + 4 H(+)(out). NDH-1 shuttles electrons from NADH, via FMN and iron-sulfur (Fe-S) centers, to quinones in the respiratory chain. The immediate electron acceptor for the enzyme in this species is believed to be a menaquinone. Couples the redox reaction to proton translocation (for every two electrons transferred, four hydrogen ions are translocated across the cytoplasmic membrane), and thus conserves the redox energy in a proton gradient. The protein is NADH-quinone oxidoreductase subunit B of Chlorobium luteolum (strain DSM 273 / BCRC 81028 / 2530) (Pelodictyon luteolum).